The primary structure comprises 375 residues: 23S rRNA (uracil(747)-C(5))-methyltransferase RlmC (375 aa).

Cysteine 3, cysteine 11, cysteine 14, and cysteine 87 together coordinate [4Fe-4S] cluster. Positions 212, 241, 262, and 307 each coordinate S-adenosyl-L-methionine. Residue cysteine 334 is the Nucleophile of the active site.

This sequence belongs to the class I-like SAM-binding methyltransferase superfamily. RNA M5U methyltransferase family. RlmC subfamily.

The enzyme catalyses uridine(747) in 23S rRNA + S-adenosyl-L-methionine = 5-methyluridine(747) in 23S rRNA + S-adenosyl-L-homocysteine + H(+). Its function is as follows. Catalyzes the formation of 5-methyl-uridine at position 747 (m5U747) in 23S rRNA. This chain is 23S rRNA (uracil(747)-C(5))-methyltransferase RlmC, found in Escherichia coli O9:H4 (strain HS).